A 91-amino-acid polypeptide reads, in one-letter code: Small ribosomal subunit protein uS19 (91 aa).

The protein belongs to the universal ribosomal protein uS19 family.

Its function is as follows. Protein S19 forms a complex with S13 that binds strongly to the 16S ribosomal RNA. The sequence is that of Small ribosomal subunit protein uS19 from Prochlorococcus marinus subsp. pastoris (strain CCMP1986 / NIES-2087 / MED4).